The following is a 163-amino-acid chain: Probable protein tyrosine phosphatase type IVA B (163 aa).

Residues 10–161 (TIIESSTHKF…YKASKKAGCK (152 aa)) enclose the Tyrosine-protein phosphatase domain. Cys-49 and Cys-104 are oxidised to a cystine. Asp-70 acts as the Proton donor in catalysis. Cys-104 (phosphocysteine intermediate) is an active-site residue. 105–110 (IAGLGR) lines the phosphate pocket. Position 110 (Arg-110) interacts with substrate. A Cysteine methyl ester modification is found at Cys-160. The S-farnesyl cysteine moiety is linked to residue Cys-160. Residues 161–163 (KIM) constitute a propeptide, removed in mature form.

This sequence belongs to the protein-tyrosine phosphatase family.

It is found in the membrane. It catalyses the reaction O-phospho-L-tyrosyl-[protein] + H2O = L-tyrosyl-[protein] + phosphate. This chain is Probable protein tyrosine phosphatase type IVA B, found in Dictyostelium discoideum (Social amoeba).